A 335-amino-acid chain; its full sequence is Phenylalanine--tRNA ligase alpha subunit (335 aa).

Glu-262 provides a ligand contact to Mg(2+).

Belongs to the class-II aminoacyl-tRNA synthetase family. Phe-tRNA synthetase alpha subunit type 1 subfamily. In terms of assembly, tetramer of two alpha and two beta subunits. The cofactor is Mg(2+).

The protein resides in the cytoplasm. The enzyme catalyses tRNA(Phe) + L-phenylalanine + ATP = L-phenylalanyl-tRNA(Phe) + AMP + diphosphate + H(+). The polypeptide is Phenylalanine--tRNA ligase alpha subunit (Prochlorococcus marinus subsp. pastoris (strain CCMP1986 / NIES-2087 / MED4)).